A 495-amino-acid chain; its full sequence is Serine/threonine-protein kinase STN8, chloroplastic (495 aa).

The N-terminal 49 residues, 1–49 (MASLLSPATPTATSAAFHSCSTAGFSTPTHISSQNSSLSLLSRRGCMMR), are a transit peptide targeting the chloroplast. The Protein kinase domain occupies 133-477 (FLVTEKLGEG…AAAALRHPYF (345 aa)). ATP-binding positions include 139 to 147 (LGEGSFGVV) and Lys186. Asp308 serves as the catalytic Proton acceptor.

Belongs to the protein kinase superfamily. Ser/Thr protein kinase family.

The protein resides in the plastid. It is found in the chloroplast thylakoid. It catalyses the reaction L-seryl-[protein] + ATP = O-phospho-L-seryl-[protein] + ADP + H(+). The catalysed reaction is L-threonyl-[protein] + ATP = O-phospho-L-threonyl-[protein] + ADP + H(+). Its function is as follows. Light-dependent serine/threonine protein kinase that specifically phosphorylates N-terminal threonine residues in psbA/D1, psbD/D2, psbC/CP43 and psbH, which are components of the core antenna complex of photosystem II. Phosphorylation of PSII core components facilitates the exchange of chlorophyll proteins between the grana and the stroma lamellae. Also involved in the phosphorylation of the calcium-sensing receptor (CaS). This chain is Serine/threonine-protein kinase STN8, chloroplastic (STN8), found in Arabidopsis thaliana (Mouse-ear cress).